The sequence spans 131 residues: Global transcriptional regulator Spx (131 aa).

Cysteines 10 and 13 form a disulfide.

It belongs to the ArsC family. Spx subfamily. In terms of assembly, interacts with the C-terminal domain of the alpha subunit of the RNAP.

The protein resides in the cytoplasm. Its activity is regulated as follows. Under non-stress conditions, Spx is degraded by ClpXP. Efficient degradation by ClpXP requires the adapter protein SpxH/YjbH. Function, levels and solubility of Spx are affected by SpxH/YjbH aggregation and stress conditions. In terms of biological role, global transcriptional regulator that plays a key role in stress response and exerts either positive or negative regulation of genes. Acts by interacting with the C-terminal domain of the alpha subunit of the RNA polymerase (RNAP). This interaction can enhance binding of RNAP to the promoter region of target genes and stimulate their transcription, or block interaction of RNAP with activator proteins and repress transcription. Its function is as follows. Required for transcription of thioredoxin reductase (trxB). Modulates the expression of icaR, encoding a repressor of the biofilm operon icaADBC. Also controls the transcription of trfA, a gene implicated in cell wall antibiotic resistance, which in turn is required for degradation of MazE antitoxin, the unstable component of the MazEF toxin-antitoxin system, that neutralizes the endoribonuclease activity of MazF toxin. This is Global transcriptional regulator Spx from Staphylococcus aureus (strain NCTC 8325 / PS 47).